A 130-amino-acid chain; its full sequence is Small ribosomal subunit protein uS9 (130 aa).

The segment at 108 to 130 is disordered; that stretch reads SREVERKKVGLRKARKRPQYSKR. The span at 116-130 shows a compositional bias: basic residues; sequence VGLRKARKRPQYSKR.

It belongs to the universal ribosomal protein uS9 family.

This is Small ribosomal subunit protein uS9 from Cellvibrio japonicus (strain Ueda107) (Pseudomonas fluorescens subsp. cellulosa).